The sequence spans 212 residues: 2,3-bisphosphoglycerate-dependent phosphoglycerate mutase (212 aa).

Substrate-binding positions include 9 to 16, 22 to 23, Arg-61, 88 to 91, Lys-99, 115 to 116, and 159 to 160; these read RHGQSEWN, TG, ERDY, RR, and GN. The active-site Tele-phosphohistidine intermediate is the His-10. Catalysis depends on Glu-88, which acts as the Proton donor/acceptor.

It belongs to the phosphoglycerate mutase family. BPG-dependent PGAM subfamily. In terms of assembly, homodimer.

The enzyme catalyses (2R)-2-phosphoglycerate = (2R)-3-phosphoglycerate. The protein operates within carbohydrate degradation; glycolysis; pyruvate from D-glyceraldehyde 3-phosphate: step 3/5. Functionally, catalyzes the interconversion of 2-phosphoglycerate and 3-phosphoglycerate. The sequence is that of 2,3-bisphosphoglycerate-dependent phosphoglycerate mutase from Methylorubrum extorquens (strain CM4 / NCIMB 13688) (Methylobacterium extorquens).